Reading from the N-terminus, the 89-residue chain is Small ribosomal subunit protein uS15 (89 aa).

The protein belongs to the universal ribosomal protein uS15 family. In terms of assembly, part of the 30S ribosomal subunit. Forms a bridge to the 50S subunit in the 70S ribosome, contacting the 23S rRNA.

One of the primary rRNA binding proteins, it binds directly to 16S rRNA where it helps nucleate assembly of the platform of the 30S subunit by binding and bridging several RNA helices of the 16S rRNA. In terms of biological role, forms an intersubunit bridge (bridge B4) with the 23S rRNA of the 50S subunit in the ribosome. The sequence is that of Small ribosomal subunit protein uS15 from Syntrophobacter fumaroxidans (strain DSM 10017 / MPOB).